The following is a 336-amino-acid chain: Abasic site processing protein HMCES (336 aa).

Cys-2 serves as the catalytic Nucleophile. Cys-2 is subject to Thiazolidine linkage to a ring-opened DNA abasic site. The span at Gln-29–Tyr-38 shows a compositional bias: basic and acidic residues. Positions Gln-29–Val-52 are disordered. Glu-127 is an active-site residue. Residues Leu-283–Ala-336 are disordered.

The protein belongs to the SOS response-associated peptidase family.

It is found in the chromosome. With respect to regulation, formation and reversal of DNA-protein cross-link depends on DNA context. Catalyzes formation of the thiazolidine linkage in presence of abasic sites in single-stranded DNA. Mediates the reversal of the thiazolidine cross-link in presence of double stranded DNA. In terms of biological role, sensor of abasic sites in single-stranded DNA (ssDNA) required to preserve genome integrity by promoting error-free repair of abasic sites. Acts as an enzyme that recognizes and binds abasic sites in ssDNA at replication forks and chemically modifies the lesion by forming a covalent cross-link with DNA: forms a stable thiazolidine linkage between a ring-opened abasic site and the alpha-amino and sulfhydryl substituents of its N-terminal catalytic cysteine residue. The HMCES DNA-protein cross-link is then either reversed or degraded. HMCES is able to catalyze the reversal of its thiazolidine cross-link and cycle between a cross-link and a non-cross-linked state depending on DNA context: mediates self-reversal of the thiazolidine cross-link in double stranded DNA, allowing APEX1 to initiate downstream repair of abasic sites. The HMCES DNA-protein cross-link can also be degraded by the SPRTN metalloprotease following unfolding by the BRIP1/FANCJ helicase. Promotes error-free repair of abasic sites by protecting abasic sites from translesion synthesis (TLS) polymerases and endonucleases that are error-prone and would generate mutations and double-strand breaks. Acts as a protease: mediates autocatalytic processing of its N-terminal methionine in order to expose the catalytic cysteine. The HMCES DNA-protein cross-link is then either reversed or degraded. According to a model, the HMCES DNA-protein cross-link. In Gallus gallus (Chicken), this protein is Abasic site processing protein HMCES.